The sequence spans 339 residues: MRVYYDRDADVNLIKSKKVVIVGYGSQGRAHALNLKDSGAANVRVALREGSATVQKAQADGFEVMNVADAAKWADLMMMATPDELQADIYRDHIHNNLRDGAAIAFAHGLNVHFGLIEPKKTVDVVMIAPKGPGHTVRGEYQKGGGVPCLIAIHQDASGNAHDLALSYASGVGGGRSGVIETTFKEECETDLFGEQAVLCGGVVELIRTGFEVLVEAGYAPEMAYFECLNEMKLIVDLIYEGGIANMNYSISNTAEWGEYVTGPRIITAETKAEMKRVLKDIQTGKFTSDWMQEWKAGAARFKGIRRLNDAHQIEEVGGKLRAMMPWIEKNKLVDKARN.

The 182-residue stretch at 1-182 (MRVYYDRDAD…GGGRSGVIET (182 aa)) folds into the KARI N-terminal Rossmann domain. Residues 24–27 (YGSQ), Arg48, Ser51, Thr53, and 83–86 (DELQ) contribute to the NADP(+) site. His108 is an active-site residue. An NADP(+)-binding site is contributed by Gly134. In terms of domain architecture, KARI C-terminal knotted spans 183 to 328 (TFKEECETDL…GKLRAMMPWI (146 aa)). Asp191, Glu195, Glu227, and Glu231 together coordinate Mg(2+). A substrate-binding site is contributed by Ser252.

It belongs to the ketol-acid reductoisomerase family. The cofactor is Mg(2+).

The enzyme catalyses (2R)-2,3-dihydroxy-3-methylbutanoate + NADP(+) = (2S)-2-acetolactate + NADPH + H(+). The catalysed reaction is (2R,3R)-2,3-dihydroxy-3-methylpentanoate + NADP(+) = (S)-2-ethyl-2-hydroxy-3-oxobutanoate + NADPH + H(+). Its pathway is amino-acid biosynthesis; L-isoleucine biosynthesis; L-isoleucine from 2-oxobutanoate: step 2/4. The protein operates within amino-acid biosynthesis; L-valine biosynthesis; L-valine from pyruvate: step 2/4. Involved in the biosynthesis of branched-chain amino acids (BCAA). Catalyzes an alkyl-migration followed by a ketol-acid reduction of (S)-2-acetolactate (S2AL) to yield (R)-2,3-dihydroxy-isovalerate. In the isomerase reaction, S2AL is rearranged via a Mg-dependent methyl migration to produce 3-hydroxy-3-methyl-2-ketobutyrate (HMKB). In the reductase reaction, this 2-ketoacid undergoes a metal-dependent reduction by NADPH to yield (R)-2,3-dihydroxy-isovalerate. The sequence is that of Ketol-acid reductoisomerase (NADP(+)) from Brucella canis (strain ATCC 23365 / NCTC 10854 / RM-666).